A 115-amino-acid polypeptide reads, in one-letter code: Large ribosomal subunit protein bL19 (115 aa).

This sequence belongs to the bacterial ribosomal protein bL19 family.

Functionally, this protein is located at the 30S-50S ribosomal subunit interface and may play a role in the structure and function of the aminoacyl-tRNA binding site. The chain is Large ribosomal subunit protein bL19 from Wigglesworthia glossinidia brevipalpis.